The following is a 359-amino-acid chain: N-acetyl-gamma-glutamyl-phosphate reductase (359 aa).

Cysteine 162 is an active-site residue.

Belongs to the NAGSA dehydrogenase family. Type 1 subfamily.

The protein localises to the cytoplasm. The enzyme catalyses N-acetyl-L-glutamate 5-semialdehyde + phosphate + NADP(+) = N-acetyl-L-glutamyl 5-phosphate + NADPH + H(+). Its pathway is amino-acid biosynthesis; L-arginine biosynthesis; N(2)-acetyl-L-ornithine from L-glutamate: step 3/4. Functionally, catalyzes the NADPH-dependent reduction of N-acetyl-5-glutamyl phosphate to yield N-acetyl-L-glutamate 5-semialdehyde. The sequence is that of N-acetyl-gamma-glutamyl-phosphate reductase from Prochlorococcus marinus (strain MIT 9211).